We begin with the raw amino-acid sequence, 939 residues long: MSAQLRAAAAITPAARRVISGPAAVRRFHHYHHLPTGGIQRVEIAARGLRRSVQFPALANAYHNNAVIVRNASFTRLLPKLALKFIRVPALFGGMMLGAVGWVQYQAIKVSNSAQEFYGNIKATVADTAFSVWSSAVDIAEQTKRGWENTKNQFEIPEWLDRIMKGEGLAGEGSGSGEGGPNGGPEPPRQSRAGAATVAGASATVYGYGASDNDDRTPEEIMRDDNMMFITKKMIEIRNLLQKVGQGSTVTLPSIVVIGSQSSGKSSVLEAIVGHEFLPKGSNMITRRPIELTLVNDPEAKVDYGEFPDLGLARVTDFSLIQKTLTELNQSVPESECVTDDPIRLTIHSPNIPDLSLIDLPGYIQVAGENQPRELKRKITELCDKYIRGPNIILAISAADTDLANSTALQASRRVDPRGERTIGVITKMDLVEPEKGAAILSDRQYPLKLGYVGVISKLPPQSGLFRRDTGNLLASINRNEKNYFGSHPTEFGPDSGVSTGVMTLRKKLLQVLEQQMSSKLNETTEAIQRELEETTYQFKVQYNEQPMSAESYLAASLDDFKHQFHEFASSFGRPQLQTLLKDALDQKVLDQLAARYWNRPIEDLSPAPREPDNIIDLPKADPDSPYWHRQLDTACSGLTRLGVGRLAATVAASAIQQHVEKLLDKSSFAKHPSARKVISDAAATVLADRSYATSDGIEISLKPYKFDPDIQPNEWAQGREHVVGVLQAELEQCQAAMKALENSVGGRKKLKEVMSFVDKARKGEIIVEGDHPSGAGGFSAALLARGREAVFLRDRADILSLRIQAAKSRQCKTLTNKYYCPEVFLDAVATKLAQTAVLFLNVEMLNDFYVRFPREVEAKLHEHMHAGGGLEKFAREDPKVRRHLDLIRRKELLETVLGKIEELHRISSGTAGTLGLRGAGDLKKRIGAPSSSGRRSFF.

Residues 1–27 (MSAQLRAAAAITPAARRVISGPAAVRR) constitute a mitochondrion transit peptide. Residues 85–103 (FIRVPALFGGMMLGAVGWV) traverse the membrane as a helical segment. Residues 170–183 (AGEGSGSGEGGPNG) show a composition bias toward gly residues. Residues 170–196 (AGEGSGSGEGGPNGGPEPPRQSRAGAA) form a disordered region. In terms of domain architecture, Dynamin-type G spans 249–522 (TVTLPSIVVI…LEQQMSSKLN (274 aa)). The tract at residues 259–266 (GSQSSGKS) is G1 motif. GTP contacts are provided by Ser262, Gly264, Lys265, Ser266, Ser267, and Gly281. Ser266 is a binding site for Mg(2+). The segment at 285-287 (ITR) is G2 motif. Mg(2+) contacts are provided by Thr286 and Asp359. The segment at 359–362 (DLPG) is G3 motif. Positions 427 to 430 (TKMD) are G4 motif. GTP contacts are provided by Lys428, Asp430, and Ser457. A G5 motif region spans residues 456 to 459 (ISKL). Positions 549–703 (SAESYLAASL…TSDGIEISLK (155 aa)) are stalk region. The interval 710–809 (DIQPNEWAQG…LSLRIQAAKS (100 aa)) is paddle region. The segment at 810 to 877 (RQCKTLTNKY…GGGLEKFARE (68 aa)) is stalk region. A disulfide bridge connects residues Cys812 and Cys821. In terms of domain architecture, GED spans 815-909 (LTNKYYCPEV…KIEELHRISS (95 aa)).

It belongs to the TRAFAC class dynamin-like GTPase superfamily. Dynamin/Fzo/YdjA family. As to quaternary structure, oligomeric complex consisting of membrane-bound and soluble forms of MGM1. In terms of processing, cleavage of the transit peptide by mitochondrial processing protease (MPP) produces a long integral membrane form of MGM1 (L-MGM1). Further processing by the rhomboid protease PCP1 produces a short peripheral membrane form of MGM1 (S-MGM1). Both forms are required for full activity.

It localises to the mitochondrion inner membrane. Its subcellular location is the mitochondrion intermembrane space. The enzyme catalyses GTP + H2O = GDP + phosphate + H(+). Its function is as follows. Dynamin-related GTPase that is essential for normal mitochondrial morphology by mediating fusion of the mitochondrial inner membranes, regulating cristae morphology and maintaining respiratory chain function. Exists in two forms: the transmembrane, long form (Dynamin-like GTPase MGM1, long form; L-MGM1), which is tethered to the inner mitochondrial membrane, and the short soluble form (Dynamin-like GTPase MGM1, short form; S-MGM1), which results from proteolytic cleavage and localizes in the intermembrane space. Both forms (L-MGM1 and S-MGM1) cooperate to catalyze the fusion of the mitochondrial inner membrane. The equilibrium between L-MGM1 and S-MGM1 is essential: excess levels of S-MGM1, following loss of mitochondrial membrane potential, lead to an impaired equilibrium between L-MGM1 and S-MGM1, inhibiting mitochondrial fusion. Plays a role in the maintenance and remodeling of mitochondrial cristae, some invaginations of the mitochondrial inner membrane that provide an increase in the surface area. Probably acts by forming helical filaments at the inside of inner membrane tubes with the shape and dimensions of crista junctions. Functionally, constitutes the transmembrane long form (L-MGM1) that plays a central role in mitochondrial inner membrane fusion and cristae morphology. L-MGM1 and the soluble short form (S-MGM1) form higher-order helical assemblies that coordinate the fusion of mitochondrial inner membranes. Inner membrane-anchored L-MGM1 molecules initiate membrane remodeling by recruiting soluble S-MGM1 to rapidly polymerize into a flexible cylindrical scaffold encaging the mitochondrial inner membrane. Once at the membrane surface, the formation of S-MGM1 helices induce bilayer curvature. MGM1 dimerization through the paddle region, which inserts into cardiolipin-containing membrane, promotes GTP hydrolysis and the helical assembly of a flexible MGM1 lattice on the membrane, which drives membrane curvature and mitochondrial fusion. Constitutes the soluble short form (S-MGM1) generated by cleavage by PCP1, which plays a central role in mitochondrial inner membrane fusion and cristae morphology. The transmembrane long form (L-MGM1) and the S-MGM1 form higher-order helical assemblies that coordinate the fusion of mitochondrial inner membranes. Inner membrane-anchored L-MGM1 molecules initiate membrane remodeling by recruiting soluble S-MGM1 to rapidly polymerize into a flexible cylindrical scaffold encaging the mitochondrial inner membrane. Once at the membrane surface, the formation of S-MGM1 helices induce bilayer curvature. MGM1 dimerization through the paddle region, which inserts into cardiolipin-containing membrane, promotes GTP hydrolysis and the helical assembly of a flexible MGM1 lattice on the membrane, which drives membrane curvature and mitochondrial fusion. Excess levels of S-MGM1 produced by cleavage by PCP1 following stress conditions that induce loss of mitochondrial membrane potential, lead to an impaired equilibrium between L-MGM1 and S-MGM1, thereby inhibiting mitochondrial fusion. The chain is Dynamin-like GTPase MGM1, mitochondrial from Chaetomium thermophilum (strain DSM 1495 / CBS 144.50 / IMI 039719) (Thermochaetoides thermophila).